The sequence spans 228 residues: Deoxyribose-phosphate aldolase (228 aa).

The active-site Proton donor/acceptor is the Asp96. Residue Lys157 is the Schiff-base intermediate with acetaldehyde of the active site. The active-site Proton donor/acceptor is the Lys185.

It belongs to the DeoC/FbaB aldolase family. DeoC type 1 subfamily.

Its subcellular location is the cytoplasm. The enzyme catalyses 2-deoxy-D-ribose 5-phosphate = D-glyceraldehyde 3-phosphate + acetaldehyde. It functions in the pathway carbohydrate degradation; 2-deoxy-D-ribose 1-phosphate degradation; D-glyceraldehyde 3-phosphate and acetaldehyde from 2-deoxy-alpha-D-ribose 1-phosphate: step 2/2. Catalyzes a reversible aldol reaction between acetaldehyde and D-glyceraldehyde 3-phosphate to generate 2-deoxy-D-ribose 5-phosphate. The chain is Deoxyribose-phosphate aldolase from Picosynechococcus sp. (strain ATCC 27264 / PCC 7002 / PR-6) (Agmenellum quadruplicatum).